A 281-amino-acid polypeptide reads, in one-letter code: Bifunctional protein FolD (281 aa).

Residue 163–165 (GRS) participates in NADP(+) binding.

This sequence belongs to the tetrahydrofolate dehydrogenase/cyclohydrolase family. As to quaternary structure, homodimer.

The catalysed reaction is (6R)-5,10-methylene-5,6,7,8-tetrahydrofolate + NADP(+) = (6R)-5,10-methenyltetrahydrofolate + NADPH. It carries out the reaction (6R)-5,10-methenyltetrahydrofolate + H2O = (6R)-10-formyltetrahydrofolate + H(+). The protein operates within one-carbon metabolism; tetrahydrofolate interconversion. Its function is as follows. Catalyzes the oxidation of 5,10-methylenetetrahydrofolate to 5,10-methenyltetrahydrofolate and then the hydrolysis of 5,10-methenyltetrahydrofolate to 10-formyltetrahydrofolate. In Leuconostoc mesenteroides subsp. mesenteroides (strain ATCC 8293 / DSM 20343 / BCRC 11652 / CCM 1803 / JCM 6124 / NCDO 523 / NBRC 100496 / NCIMB 8023 / NCTC 12954 / NRRL B-1118 / 37Y), this protein is Bifunctional protein FolD.